A 220-amino-acid polypeptide reads, in one-letter code: Deoxyribose-phosphate aldolase (220 aa).

The Proton donor/acceptor role is filled by aspartate 89. Lysine 151 (schiff-base intermediate with acetaldehyde) is an active-site residue. Lysine 180 functions as the Proton donor/acceptor in the catalytic mechanism.

It belongs to the DeoC/FbaB aldolase family. DeoC type 1 subfamily.

Its subcellular location is the cytoplasm. It catalyses the reaction 2-deoxy-D-ribose 5-phosphate = D-glyceraldehyde 3-phosphate + acetaldehyde. The protein operates within carbohydrate degradation; 2-deoxy-D-ribose 1-phosphate degradation; D-glyceraldehyde 3-phosphate and acetaldehyde from 2-deoxy-alpha-D-ribose 1-phosphate: step 2/2. Functionally, catalyzes a reversible aldol reaction between acetaldehyde and D-glyceraldehyde 3-phosphate to generate 2-deoxy-D-ribose 5-phosphate. In Macrococcus caseolyticus (strain JCSC5402) (Macrococcoides caseolyticum), this protein is Deoxyribose-phosphate aldolase.